A 67-amino-acid polypeptide reads, in one-letter code: Protein AaeX (67 aa).

Transmembrane regions (helical) follow at residues 3 to 23 and 43 to 63; these read VLPV…EIIV and LVWH…YVVS.

It belongs to the AaeX family.

The protein resides in the cell membrane. The sequence is that of Protein AaeX from Erwinia tasmaniensis (strain DSM 17950 / CFBP 7177 / CIP 109463 / NCPPB 4357 / Et1/99).